Consider the following 84-residue polypeptide: ATP synthase subunit c (84 aa).

2 helical membrane-spanning segments follow: residues 9–29 (IIGA…GFAI) and 54–74 (IVAG…LLFI).

This sequence belongs to the ATPase C chain family. In terms of assembly, F-type ATPases have 2 components, F(1) - the catalytic core - and F(0) - the membrane proton channel. F(1) has five subunits: alpha(3), beta(3), gamma(1), delta(1), epsilon(1). F(0) has three main subunits: a(1), b(2) and c(10-14). The alpha and beta chains form an alternating ring which encloses part of the gamma chain. F(1) is attached to F(0) by a central stalk formed by the gamma and epsilon chains, while a peripheral stalk is formed by the delta and b chains.

It localises to the cell inner membrane. In terms of biological role, f(1)F(0) ATP synthase produces ATP from ADP in the presence of a proton or sodium gradient. F-type ATPases consist of two structural domains, F(1) containing the extramembraneous catalytic core and F(0) containing the membrane proton channel, linked together by a central stalk and a peripheral stalk. During catalysis, ATP synthesis in the catalytic domain of F(1) is coupled via a rotary mechanism of the central stalk subunits to proton translocation. Its function is as follows. Key component of the F(0) channel; it plays a direct role in translocation across the membrane. A homomeric c-ring of between 10-14 subunits forms the central stalk rotor element with the F(1) delta and epsilon subunits. The chain is ATP synthase subunit c from Haemophilus ducreyi (strain 35000HP / ATCC 700724).